Here is a 253-residue protein sequence, read N- to C-terminus: Blue-light photoreceptor (253 aa).

Positions 6–79 (KFDVILKALN…AKIRHAINEK (74 aa)) constitute a PAS domain. Cysteine 56 carries the S-4a-FMN cysteine modification. The region spanning 80–133 (STANVLLKNYRKNGTSFMNELTIEPIYDDNDHLYFVGIQKDVTTEHNYQLELEK) is the PAC domain. Residues 142–253 (STPIVPIKEN…STIKEALQFY (112 aa)) enclose the STAS domain.

In terms of processing, FMN binds covalently to cysteine after exposure to blue light and this bond is spontaneously broken in the dark.

In terms of biological role, exhibits the same spectroscopical features and blue-light induced photochemistry as plants phototropins, with the reversible formation of a blue-shifted photoproduct, assigned to an FMN-cysteine thiol adduct. Positive regulator in the activation of the general stress transcription factor sigma-B. The protein is Blue-light photoreceptor of Listeria innocua serovar 6a (strain ATCC BAA-680 / CLIP 11262).